Here is a 721-residue protein sequence, read N- to C-terminus: Dolichyl-diphosphooligosaccharide--protein glycosyltransferase subunit STT3B (721 aa).

The Cytoplasmic segment spans residues 1 to 25 (MAAATALDSLPAPLRSLRLKTKQQE). The chain crosses the membrane as a helical span at residues 26–46 (LLLRVSALALIYVLAFVVRLF). Residues 47–129 (SVLRYESMIH…VHIREVCVLT (83 aa)) are Lumenal-facing. The DXD motif 1 signature appears at 57–59 (EFD). Mn(2+) is bound at residue Asp-59. Residues 130–148 (APFFAANTTLVAYAFGREI) form a helical membrane-spanning segment. Residues 149–150 (WD) lie on the Cytoplasmic side of the membrane. Residues 151-168 (SGAGLVAAALIAVCPGYI) form a helical membrane-spanning segment. Residues 169–179 (SRSVAGSYDNE) are Lumenal-facing. Residues Asp-177 and Glu-179 each coordinate Mn(2+). Residues 177 to 179 (DNE) carry the DXD motif 2 motif. Residues 180 to 199 (GVAIFALLLTFYLFVRAVNT) traverse the membrane as a helical segment. Residues 200–201 (GS) lie on the Cytoplasmic side of the membrane. Residues 202–216 (LAWSLASAFGYFYMV) form a helical membrane-spanning segment. At 217–221 (SAWGG) the chain is on the lumenal side. A helical transmembrane segment spans residues 222–238 (YVFIINLLPLYVLVLLV). Topologically, residues 239-243 (TGRYS) are cytoplasmic. Residues 244 to 269 (QRLYVAYNSTYVLGMLLAMQIRFVGF) traverse the membrane as a helical segment. The Lumenal portion of the chain corresponds to 270-277 (QHVQSGEH). The chain crosses the membrane as a helical span at residues 278–297 (MAAMGVFFLLQVFFFLDWVK). Over 298–313 (YLLNDAKLFKSFLRIT) the chain is Cytoplasmic. Residues 314-334 (LTCVITVGTLALGIGTASGYI) form a helical membrane-spanning segment. The Lumenal segment spans residues 335–367 (SPWTGRFYSLLDPTYAKDHIPIIASVSEHQPTA). An SVSE motif motif is present at residues 359 to 362 (SVSE). The chain crosses the membrane as a helical span at residues 368–390 (WSSFMFDFHILLFLFPAGLYFCF). Over 391–396 (KRLSDA) the chain is Cytoplasmic. Residues 397–413 (TIFIVMYGLTSMYFAGV) form a helical membrane-spanning segment. At 414–417 (MVRL) the chain is on the lumenal side. Residue Arg-416 coordinates dolichyl diphosphooligosaccharide. Residues 418-439 (ILVAAPAVCLISAIAASATIKN) form a helical membrane-spanning segment. Topologically, residues 440–471 (LTTLIRTKSKSPQTVSGKSSGSKAAAKGAVDQ) are cytoplasmic. The chain crosses the membrane as a helical span at residues 472 to 492 (SLPFQQNVAIALLLGAFYLLS). The Lumenal segment spans residues 493 to 721 (RYAVHCTWVT…YKVKPPKNRS (229 aa)). The tract at residues 548–550 (WWD) is interacts with target acceptor peptide in protein substrate. A WWDYG motif motif is present at residues 548–552 (WWDYG). Dolichyl diphosphooligosaccharide is bound at residue Tyr-553. N-linked (GlcNAc...) asparagine glycans are attached at residues Asn-560 and Asn-567. Asn-571 carries an N-linked (GlcNAc...) (high mannose) asparagine glycan. Residues 615-622 (DINKFLWM) carry the DK motif motif.

The protein belongs to the STT3 family. As to quaternary structure, component of the oligosaccharyltransferase (OST) complex. Mg(2+) is required as a cofactor. The cofactor is Mn(2+).

The protein localises to the endoplasmic reticulum membrane. It carries out the reaction a di-trans,poly-cis-dolichyl diphosphooligosaccharide + L-asparaginyl-[protein] = N(4)-(oligosaccharide-(1-&gt;4)-N-acetyl-beta-D-glucosaminyl-(1-&gt;4)-N-acetyl-beta-D-glucosaminyl)-L-asparaginyl-[protein] + a di-trans,poly-cis-dolichyl diphosphate + H(+). It participates in protein modification; protein glycosylation. Catalytic subunit of the oligosaccharyl transferase (OST) complex that catalyzes the initial transfer of a defined glycan (Glc(3)Man(9)GlcNAc(2) in eukaryotes) from the lipid carrier dolichol-pyrophosphate to an asparagine residue within an Asn-X-Ser/Thr consensus motif in nascent polypeptide chains, the first step in protein N-glycosylation. N-glycosylation occurs cotranslationally and the complex associates with the Sec61 complex at the channel-forming translocon complex that mediates protein translocation across the endoplasmic reticulum (ER). All subunits are required for a maximal enzyme activity. This subunit contains the active site and the acceptor peptide and donor lipid-linked oligosaccharide (LLO) binding pockets. The sequence is that of Dolichyl-diphosphooligosaccharide--protein glycosyltransferase subunit STT3B (STT3B) from Oryza sativa subsp. japonica (Rice).